The following is a 408-amino-acid chain: UPF0761 membrane protein NMC0462 (408 aa).

6 helical membrane-spanning segments follow: residues 43–63 (LLAL…FPVF), 100–120 (LTAI…RTID), 139–159 (FLVY…GISF), 176–196 (WSGA…LWGL), 210–230 (AFVG…LFTW), and 248–268 (VPFF…GAVL).

Belongs to the UPF0761 family.

It is found in the cell inner membrane. The polypeptide is UPF0761 membrane protein NMC0462 (Neisseria meningitidis serogroup C / serotype 2a (strain ATCC 700532 / DSM 15464 / FAM18)).